Consider the following 672-residue polypeptide: MLKLAGKEDKKLKTTVFQDETRIFNPPKELVEKSIVMQWMKKKGFKTEKEMRAWCSSDEHYLEFWDEMAKTYVDWHKPYTKVMDDSEMPYFHWFTGGEINITYNAVDRHAKGAKKDKVAYIWIPEPTDQPVQKITYGDLYKEVNKFANGLKSLGLKKGDRVSIYMPMIPQLPIAMLACAKLGVSHIVVFSGFSSKGLMDRAAHCGSRAIITVDGFYRRGKPVPLKPNADEAAGGAPSVEKIIVYKRAGVDVSMKEGRDVWWHDLVKGQSEECEPVWVDPEHRLYILYTSGTTGKPKGIEHATGGNAVGPAQTLHWVFDLKDDDVWWCTADIGWVTGHSYIVYAPLILGMTSLMYEGAADYPDFGRWWKNIQDHKVTVLYTAPTAVRMFMKQGAEWPDKYDLSSLRLLGSVGEPINPEAWMWYREHIGRGELQIMDTWWQTETGTFLNSPLPITPLKPGSCTFPLPGYDISILDEEGNEVPLGSGGNIVALKPYPSMLRAFWGDKERFMKEYWQFYWDVPGRRGVYLAGDKAQRDKDGYFFIQGRIDDVLSVAGHRIANAEVESALVAHPKIAEAAVVGKPDEVKGESIVAFVILRVGNEPSPELAKDAIAFVRKTLGPVAAPTEVHFVNDLPKTRSGKIMRRVVKARALGNPVGDISTLMNPEAVDGIPKIV.

Residues 217–220 (RRGK) and T335 contribute to the CoA site. ATP-binding positions include 411–413 (GEP), 435–440 (DTWWQT), D529, R544, and R555. Positions 566, 568, and 571 each coordinate Mg(2+). A CoA-binding site is contributed by R613. Position 638 is an N6-acetyllysine (K638).

This sequence belongs to the ATP-dependent AMP-binding enzyme family. It depends on Mg(2+) as a cofactor. Post-translationally, acetylated. Deacetylation by the SIR2-homolog deacetylase activates the enzyme. In terms of processing, the N-terminus is blocked.

It carries out the reaction acetate + ATP + CoA = acetyl-CoA + AMP + diphosphate. Functionally, catalyzes the conversion of acetate into acetyl-CoA (AcCoA), an essential intermediate at the junction of anabolic and catabolic pathways. AcsA undergoes a two-step reaction. In the first half reaction, AcsA combines acetate with ATP to form acetyl-adenylate (AcAMP) intermediate. In the second half reaction, it can then transfer the acetyl group from AcAMP to the sulfhydryl group of CoA, forming the product AcCoA. This is Acetyl-coenzyme A synthetase from Methanothrix soehngenii (Methanosaeta concilii).